Consider the following 433-residue polypeptide: Myricetin 3-O-glucosyl 1,2-rhamnoside 6'-O-caffeoyltransferase AT2 (433 aa).

Active-site proton acceptor residues include His-157 and Asp-375.

This sequence belongs to the plant acyltransferase family. As to expression, expressed in young cromes.

It carries out the reaction myricetin 3-O-[beta-D-glucosyl-(1-&gt;2)-alpha-L-rhamnoside] + (E)-caffeoyl-CoA = myricetin 3-O-[(6-O-(E)-caffeoyl-beta-D-glucosyl)-(1-&gt;2)-alpha-L-rhamnoside] + CoA. It functions in the pathway flavonoid metabolism. Functionally, caffeoyltransferase involved in montbretin A (MbA) biosynthesis. Catalyzes the caffeoylation of myricetin 3-O-beta-D-glucosyl 1,2-alpha-L-rhamnoside (MRG) to produce myricetin 3-O-(6'-O-caffeoyl)-beta-D-glucosyl 1,2-alpha-L-rhamnoside (mini-MbA), a precursor of MbA. Mini-MbA and MbA are potent inhibitors of human pancreatic alpha-amylase and are being developed as drug candidates to treat type-2 diabetes. In vitro, is able to catalyze the caffeoylation of quercetin 3-O-sophoroside (QGG), although QGG may not be a physiological substrate in vivo. In vitro, can use coumaryl-CoA, feruloyl-CoA and acetyl-CoA, although these three acyl donors may not be physiological in vivo. This is Myricetin 3-O-glucosyl 1,2-rhamnoside 6'-O-caffeoyltransferase AT2 from Crocosmia x crocosmiiflora (Montbretia).